The primary structure comprises 505 residues: Chromatin assembly factor 1 subunit FAS2 homolog (505 aa).

7 WD repeats span residues 11–50 (HEQQPVLTLDFHPVSRRLATGGSDHDIKIWVIASDDSDKK), 62–101 (SHSSAVNVLRFSPSGENLASGADGGGIIIWKLHSTDDGEA), 110–149 (FHHKDVLDLQWSQDGAFLVSASVDNSCIVWDAIKGSVQQK), 152–191 (GHLHYVQGVAWDPLGQYIASLSSDRTCRIYANKPQGKSKN), 223–268 (FHDE…SRRD), 278–333 (GASK…PILI), and 337–378 (LHYA…LPYN). Residues 479 to 505 (VTAPPVSTKNSASSKPTKKRITPIAIN) form a disordered region.

Belongs to the WD repeat HIR1 family. In terms of assembly, component of the chromatin assembly factor 1 (CAF-1) complex, composed of FSM (FAS1), FAS2 and MSI1.

It is found in the nucleus. Its function is as follows. Component of the chromatin assembly factor complex (CAF-1) involved in chromatin assembly following DNA replication and DNA repair. Required for several aspects of development, including apical meristem maintenance by regulating the durations of the S- and G2-phases of the cell cycle through its chromatin assembly activity. The polypeptide is Chromatin assembly factor 1 subunit FAS2 homolog (FAS2) (Oryza sativa subsp. japonica (Rice)).